We begin with the raw amino-acid sequence, 97 residues long: uncharacterized protein (97 aa).

This is an uncharacterized protein from Geobacillus stearothermophilus (Bacillus stearothermophilus).